The following is a 298-amino-acid chain: Iron/alpha-ketoglutarate-dependent dioxygenase ausO (298 aa).

The Fe cation site is built by histidine 130, aspartate 132, and histidine 211.

Belongs to the PhyH family. Homodimer. Requires Fe cation as cofactor.

It participates in secondary metabolite biosynthesis; terpenoid biosynthesis. Iron/alpha-ketoglutarate-dependent dioxygenase; part of the gene cluster that mediates the biosynthesis of calidodehydroaustin, a fungal meroterpenoid. The first step of the pathway is the synthesis of 3,5-dimethylorsellinic acid by the polyketide synthase ausA. 3,5-dimethylorsellinic acid is then prenylated by the polyprenyl transferase ausN. Further epoxidation by the FAD-dependent monooxygenase ausM and cyclization by the probable terpene cyclase ausL lead to the formation of protoaustinoid A. Protoaustinoid A is then oxidized to spiro-lactone preaustinoid A3 by the combined action of the FAD-binding monooxygenases ausB and ausC, and the dioxygenase ausE. Acid-catalyzed keto-rearrangement and ring contraction of the tetraketide portion of preaustinoid A3 by ausJ lead to the formation of preaustinoid A4. The aldo-keto reductase ausK, with the help of ausH, is involved in the next step by transforming preaustinoid A4 into isoaustinone which is in turn hydroxylated by the P450 monooxygenase ausI to form austinolide. The cytochrome P450 monooxygenase ausG modifies austinolide to austinol. Austinol is further acetylated to austin by the O-acetyltransferase ausP, which spontaneously changes to dehydroaustin. The cytochrome P450 monooxygenase ausR then converts dehydroaustin is into 7-dehydrodehydroaustin. The hydroxylation catalyzed by ausR permits the O-acetyltransferase ausQ to add an additional acetyl group to the molecule, leading to the formation of acetoxydehydroaustin. The short chain dehydrogenase ausT catalyzes the reduction of the double bond present between carbon atoms 1 and 2 to convert 7-dehydrodehydroaustin into 1,2-dihydro-7-hydroxydehydroaustin. AusQ catalyzes not only an acetylation reaction but also the addition of the PKS ausV diketide product to 1,2-dihydro-7-hydroxydehydroaustin, forming precalidodehydroaustin. Finally, the iron/alpha-ketoglutarate-dependent dioxygenase converts precalidodehydroaustin into calidodehydroaustin. The sequence is that of Iron/alpha-ketoglutarate-dependent dioxygenase ausO from Aspergillus calidoustus.